A 430-amino-acid polypeptide reads, in one-letter code: Agropine synthesis reductase (430 aa).

Residue 203–227 (LVSGSNRGVGKAIAEDLIAHGYRLS) coordinates NAD(+). Ser333 is a binding site for substrate. Catalysis depends on Tyr346, which acts as the Proton acceptor.

Belongs to the short-chain dehydrogenases/reductases (SDR) family.

The protein operates within opine metabolism; mannopine biosynthesis. Reduces deoxy-fructosyl-glutamine to mannopine. The sequence is that of Agropine synthesis reductase (mas1) from Rhizobium rhizogenes (Agrobacterium rhizogenes).